The chain runs to 1758 residues: MSNINEKDLSEFLESNLRSLNDIDDAVATSSAECNYEDYEEFTNSVDLTFFEQDLSGVLKELKKLAESVVISGKKCDIRNIFEESDVATMKFNLFVWYFLENGQRSDSSEEDVDKGVSAASSYIAMCSLPGAISDLYQIGLYNQCLKIIRNCCHTVRIGETVVTKKSSGAKKKKAGGKSDETNVDGEMTVTTGAADPIIGPPRIAVDSAERYLHHLTTQLFAFLHSNTFSIDTPTLMSTLEVVEDIGRLDLDNRTAGRAIRANSVHEFRSLERFTDRYCAFVHSLVESKYKTRAEVAYGRLIRPRLALMPYPDESNKSSKISTERKRSGELHVNLILSRISRNPEARELKYIQTVTVMVYSQCPDLAEFRTNIATFIHKILEALPYTYTYDFVQFMNVLFKGRGAGVKSLSTELSSILISSFDFTAPDPGAIPNLDAEQNEEEDEEEEGEDEEEEEENEQDDVAVKEEEQSDKSDEENDGDNEENVSKKKEEKKKEKKAKEVKEVGRMDAMSVLYNIVYMACLDKAAAMRLHGANSLTKILQSQSHREAFQLFCATINAEMDEKFGAVGDNLSESLEDLNVSGKAPSSKTKKPTDLLLDEQQIIQKFNKLKLMNKGETRVEKDIVYMIVRRLSTDDKAPVKKAACSLLKSYLSYCDEASKFEVVLSILQMLCRDRMVSVRKTGADAFTELMLRDAILFKESLSSKWLHTLISMLNDTDNDVTEHARKLIMKVLTPLLENSSDLTWTLLDTIESVTNHRQYLMSTLKDAVREKLVKRTVMDSMKQHIISGSEKLDGAWMVFSQLCVQFEQNVDFAIETFSRVDLSRESNLVQYMIHVIENNIKKIDDDTKSDLVNTLQGTFRDYCLHPSHSRSIYHCLGKLMDGIGDRSLHGKEFSDFGETLLIKCFDTIVQSFEMFKDKDEWKRNSESQERLLCTALNVASEVFSYSPQLVPRHERLGKTLSLIVNSTENGSSDASTVNPDMPSVHHTRPPTQLSEVPSSQKSSKGGMMSHEGAMFSDKVRAVGVVTLANMILAHDRLLKLMPMLVKQLQYNTAHQIRSNIVLAIGDICSSYKTDRYAPMLAASLCDPSVIVRRHAINQIARLISFGIFRFNGEIMIRMMLASLDANEDVRNDAKLYISEVLQSEEPNFFPLNFVQYMIALTQARRLVGVGHDEDDRGQVDVAIGGGDPLARPSRIAIYTFMIDSLDDRSRFDVKMSICQRIFTPIVNGEYDFSDYNVQCLLDDALLIMASNEMQVKMDVGKNPNENAMDDPSPEVLEAATGFMQKVYLDHYMKTIVPSILSLREFLNQHRSPLQRKCLLAIRMICIEHKNDIDEILQDNRQLKDEMMFELQRVKQRTEEANRILDEYLKRVAEFKKQQKRLSKSPAPMELDAEPVQESAEAVEMGSPARRIEEDQENVEEEVEMRTPQKKNPDADVPRTPLNALRSTTEEKSTPNARLLSPKTIKKIRRSLGALIHTEMRLNPPNLEETKIDDTTINRSKQADKTEEKTIVEEEPMEEAAAEKTVTAENDHVDAEKTVIAVEIPPATEAEEDEVVDVQSESRRSRRRKTPNYDDEESVDADGKIWKKPKIVNKSPEKEVNISANVTLRRSRRGQSTEPPVVKENSNRKRKSVDEEEENVPTSSSGNTENDPLSRGVTPLIFDESKLGAGRHCSTPIRSREDADPSDVTFSLNLSAITEKEDLKNRSKKVKLITFTISSKRMKRKADQCHCINLPSKFVLFISTVCIIVRLSAVFSLN.

Disordered stretches follow at residues 428–501, 969–1008, 1379–1460, and 1500–1656; these read DPGA…KAKE, ENGSSDASTVNPDMPSVHHTRPPTQLSEVPSSQKSSKGGM, QKRL…ARLL, and SKQA…LSRG. Positions 438–462 are enriched in acidic residues; the sequence is EQNEEEDEEEEGEDEEEEEENEQDD. The segment covering 463 to 473 has biased composition (basic and acidic residues); it reads VAVKEEEQSDK. The span at 474–484 shows a compositional bias: acidic residues; the sequence is SDEENDGDNEE. A compositionally biased stretch (basic and acidic residues) spans 485–501; that stretch reads NVSKKKEEKKKEKKAKE. Polar residues predominate over residues 969–979; that stretch reads ENGSSDASTVN. Positions 999 to 1008 are enriched in low complexity; sequence SSQKSSKGGM. Residues 1326-1385 are a coiled coil; that stretch reads CIEHKNDIDEILQDNRQLKDEMMFELQRVKQRTEEANRILDEYLKRVAEFKKQQKRLSKS. Residues 1414 to 1423 are compositionally biased toward acidic residues; it reads EDQENVEEEV. 2 stretches are compositionally biased toward basic and acidic residues: residues 1424–1437 and 1500–1512; these read EMRTPQKKNPDADV and SKQADKTEEKTIV. Polar residues-rich tracts occupy residues 1602–1618 and 1640–1651; these read ISANVTLRRSRRGQSTE and VPTSSSGNTEND.

In terms of assembly, component of the condensin-2 complex.

The protein resides in the nucleus. The protein localises to the chromosome. It is found in the centromere. Chromosomal protein which is recruited to mitotic chromosomes by hcp-3 (CENP-A) and hcp-4 (CENP-C). Involved in chromosome segregation during mitosis, playing a role in chromosome condensation and in maintaining chromosome morphology, rigidity and orientation during mitosis. In Caenorhabditis elegans, this protein is Condensin-2 complex subunit hcp-6.